A 248-amino-acid polypeptide reads, in one-letter code: MAGHSQFKNIMHRKGRQDAVRSKMFSKLGREITVAAKQGLPDPTMNPRLRLAIQNAKAQSMPKDNIERAIKKAAGNDGENYDEVRYEGRGPGGVSVIVEALTDNRNRTASNVRAAFTKSGGALGETGSVSFMFDRVGEIVYKSSVGDADKVMEAAIEAGADDVQSGEEEHVIICAFEDIGEVSKALEAALGEAESIKTIWKPQTNTELDEEKARSVLKLLNVLEDDDDVQNVYTNFEVSDEVMEKLSA.

The protein belongs to the TACO1 family.

Its subcellular location is the cytoplasm. The chain is Probable transcriptional regulatory protein Oant_1200 from Brucella anthropi (strain ATCC 49188 / DSM 6882 / CCUG 24695 / JCM 21032 / LMG 3331 / NBRC 15819 / NCTC 12168 / Alc 37) (Ochrobactrum anthropi).